The primary structure comprises 255 residues: tRNA (guanine-N(1)-)-methyltransferase (255 aa).

Residues Gly113 and 133–138 (IGDYVL) each bind S-adenosyl-L-methionine.

Belongs to the RNA methyltransferase TrmD family. As to quaternary structure, homodimer.

It localises to the cytoplasm. It catalyses the reaction guanosine(37) in tRNA + S-adenosyl-L-methionine = N(1)-methylguanosine(37) in tRNA + S-adenosyl-L-homocysteine + H(+). Functionally, specifically methylates guanosine-37 in various tRNAs. The polypeptide is tRNA (guanine-N(1)-)-methyltransferase (Mannheimia succiniciproducens (strain KCTC 0769BP / MBEL55E)).